Reading from the N-terminus, the 435-residue chain is Serine--tRNA ligase (435 aa).

Positions 41 to 70 (QVKTEELQAQRNSRSKSIGQAKAKGDHEEA) are disordered. Residues 49–58 (AQRNSRSKSI) show a composition bias toward polar residues. 242-244 (TAE) serves as a coordination point for L-serine. Position 273–275 (273–275 (RSE)) interacts with ATP. An L-serine-binding site is contributed by E296. An ATP-binding site is contributed by 360–363 (EISS). Residue S396 coordinates L-serine.

The protein belongs to the class-II aminoacyl-tRNA synthetase family. Type-1 seryl-tRNA synthetase subfamily. Homodimer. The tRNA molecule binds across the dimer.

It is found in the cytoplasm. The catalysed reaction is tRNA(Ser) + L-serine + ATP = L-seryl-tRNA(Ser) + AMP + diphosphate + H(+). It catalyses the reaction tRNA(Sec) + L-serine + ATP = L-seryl-tRNA(Sec) + AMP + diphosphate + H(+). It functions in the pathway aminoacyl-tRNA biosynthesis; selenocysteinyl-tRNA(Sec) biosynthesis; L-seryl-tRNA(Sec) from L-serine and tRNA(Sec): step 1/1. Catalyzes the attachment of serine to tRNA(Ser). Is also able to aminoacylate tRNA(Sec) with serine, to form the misacylated tRNA L-seryl-tRNA(Sec), which will be further converted into selenocysteinyl-tRNA(Sec). In Aliivibrio fischeri (strain MJ11) (Vibrio fischeri), this protein is Serine--tRNA ligase.